A 244-amino-acid polypeptide reads, in one-letter code: Lytic polysaccharide monooxygenase-like protein ANIA_04702 (244 aa).

Residues 1–23 form the signal peptide; it reads MLMSTSPSPWLAAAMLCIGLANA. Position 24 (histidine 24) interacts with Cu(2+). At histidine 24 the chain carries Methylhistidine. Residues asparagine 57, asparagine 80, asparagine 118, asparagine 159, asparagine 192, and asparagine 198 are each glycosylated (N-linked (GlcNAc...) asparagine). 2 disulfides stabilise this stretch: cysteine 72–cysteine 177 and cysteine 142–cysteine 196. Residue asparagine 215 is the site of GPI-anchor amidated asparagine attachment. Residues 216-244 constitute a propeptide, removed in mature form; sequence AGLEAVTVPSFLTAVVPTFLGIAYGLLMA.

It belongs to the X325 family. Cu(2+) serves as cofactor. In terms of processing, the catalytically essential N-terminal histidine His-24 is post-translationally modified by methylation to prevent protonation of the histidine side chain, and protect the critical active site of the enzyme from oxidative damage.

The protein localises to the cell membrane. In terms of biological role, lytic polysaccharide monooxygenase-like protein that has diverged to biological functions other than polysaccharide degradation since it does not perform oxidative cleavage of polysaccharides. Acts as a cell surface-bound protein that functions in the copper-accumulation pathway. May also act as the major cell wall sensor that regulates MAP kinase-dependent hyphal anastomosis, the fusion of hyphal cells. In Emericella nidulans (strain FGSC A4 / ATCC 38163 / CBS 112.46 / NRRL 194 / M139) (Aspergillus nidulans), this protein is Lytic polysaccharide monooxygenase-like protein ANIA_04702.